Reading from the N-terminus, the 92-residue chain is Auxin-responsive protein SAUR28 (92 aa).

The protein belongs to the ARG7 family. As to expression, higher expression in thermo-responsive cultivars (e.g. cv. Alst-1, cv. Ang-0 and cv. Com-0) than in low thermo-responsive cultivars (e.g. cv. Dja-1, cv. El-0 and cv. Kon).

It is found in the cell membrane. In terms of biological role, functions as a positive effector of cell expansion through modulation of auxin transport. Involved in thermo-responsiveness of plant architecture. Enhances plasma membrane H(+)-ATPase. The polypeptide is Auxin-responsive protein SAUR28 (Arabidopsis thaliana (Mouse-ear cress)).